The following is a 215-amino-acid chain: Ras-related protein Rab-5A (215 aa).

10 residues coordinate GTP: serine 29, alanine 30, glycine 32, lysine 33, serine 34, serine 35, histidine 46, glutamate 47, threonine 52, and glycine 78. Mg(2+) is bound at residue serine 34. 2 consecutive short sequence motifs (switch) follow at residues 44–56 and 77–93; these read QFHEFQESTIGAA and AGQERYHSLAPMYYRGA. Residue threonine 52 coordinates Mg(2+). Residue serine 84 is modified to Phosphoserine. Positions 133, 134, 136, 164, and 165 each coordinate GTP. Residues 181-215 are disordered; the sequence is LPKNEPQNPGANSARGRGVDLTEPAQPARSQCCSN. Residues cysteine 212 and cysteine 213 are each lipidated (S-geranylgeranyl cysteine).

This sequence belongs to the small GTPase superfamily. Rab family. Interacts with GDI1; this promotes dissociation from membranes; phosphorylation at Ser-84 disrupts this interaction. Interacts with GDI2; phosphorylation at Ser-84 disrupts the interaction. Interacts with EEA1. Interacts with RIN1 and GAPVD1, which regulate its pathway, probably by acting as a GEF. Interacts with RINL. Interacts with ALS2CL, SUN2, ZFYVE20 and RUFY1. Interacts with RABEP1; one RABEP1 homodimer binds two RAB5A chains, but at opposite sides of the dimer. Interacts with SGSM1 and SGSM3. Interacts with PIK3CB. Interacts with OCRL and INPP5F. May be a component of a complex composed of RAB5A, DYN2 and PIK3C3. Does not interact with BLOC-3 complex (heterodimer of HPS1 and HPS4). Interacts with CLN5. Interacts with APPL2. Interacts with F8A1/F8A2/F8A3. Found in a complex with F8A1/F8A2/F8A3, HTT and RAB5A; mediates the recruitment of HTT by RAB5A onto early endosomes. Interacts with ATP9A. Interacts with PPP1R21; mediates the recruitment of FERRY complex by RAB5A onto early endosomes. Mg(2+) serves as cofactor. Phosphorylation of Ser-84 in the switch II region by LRRK2 prevents the association of RAB regulatory proteins, including RAB GDP dissociation inhibitors GDI1 and GDI2.

It localises to the cell membrane. Its subcellular location is the early endosome membrane. It is found in the melanosome. The protein resides in the cytoplasmic vesicle. The protein localises to the cell projection. It localises to the ruffle. Its subcellular location is the membrane. It is found in the cytoplasm. The protein resides in the cytosol. The protein localises to the phagosome membrane. It localises to the endosome membrane. It carries out the reaction GTP + H2O = GDP + phosphate + H(+). With respect to regulation, regulated by guanine nucleotide exchange factors (GEFs) including RINL, which promote the exchange of bound GDP for free GTP. Regulated by GTPase activating proteins (GAPs) which increase the GTP hydrolysis activity. Inhibited by GDP dissociation inhibitors (GDIs). Its function is as follows. The small GTPases Rab are key regulators of intracellular membrane trafficking, from the formation of transport vesicles to their fusion with membranes. Rabs cycle between an inactive GDP-bound form and an active GTP-bound form that is able to recruit to membranes different sets of downstream effectors directly responsible for vesicle formation, movement, tethering and fusion. RAB5A is required for the fusion of plasma membranes and early endosomes. Contributes to the regulation of filopodia extension. Required for the exosomal release of SDCBP, CD63, PDCD6IP and syndecan. Regulates maturation of apoptotic cell-containing phagosomes, probably downstream of DYN2 and PIK3C3. The polypeptide is Ras-related protein Rab-5A (Mus musculus (Mouse)).